The sequence spans 436 residues: 3-ketoacyl-CoA thiolase (436 aa).

C99 acts as the Acyl-thioester intermediate in catalysis. Catalysis depends on proton acceptor residues H392 and C422.

The protein belongs to the thiolase-like superfamily. Thiolase family. Heterotetramer of two alpha chains (FadJ) and two beta chains (FadI).

Its subcellular location is the cytoplasm. The catalysed reaction is an acyl-CoA + acetyl-CoA = a 3-oxoacyl-CoA + CoA. It participates in lipid metabolism; fatty acid beta-oxidation. Catalyzes the final step of fatty acid oxidation in which acetyl-CoA is released and the CoA ester of a fatty acid two carbons shorter is formed. The protein is 3-ketoacyl-CoA thiolase of Shigella flexneri.